A 268-amino-acid chain; its full sequence is Indole-3-glycerol phosphate synthase (268 aa).

Belongs to the TrpC family.

It carries out the reaction 1-(2-carboxyphenylamino)-1-deoxy-D-ribulose 5-phosphate + H(+) = (1S,2R)-1-C-(indol-3-yl)glycerol 3-phosphate + CO2 + H2O. The protein operates within amino-acid biosynthesis; L-tryptophan biosynthesis; L-tryptophan from chorismate: step 4/5. The polypeptide is Indole-3-glycerol phosphate synthase (Acinetobacter baumannii (strain ACICU)).